A 208-amino-acid polypeptide reads, in one-letter code: MHDPVEYFQNNLVPMVVEQTSRGERAYDIFSRLLKERIVFVNGPVHSGMSHLIVAQLLHLEAENPSKEISMYINSPGGEVTAGMSIYDTMQYIKPKVSTLVCGMAASMGSVIAVGGEKGMRLALPNAEFLVHQPSGGARGTASDILISARSIEATRERLYQLYVKHTGQDYETVQRALDRDTWMTPEVALEWGHVDEIVTTRGADDAE.

The Nucleophile role is filled by serine 107. Histidine 132 is an active-site residue.

This sequence belongs to the peptidase S14 family. Fourteen ClpP subunits assemble into 2 heptameric rings which stack back to back to give a disk-like structure with a central cavity, resembling the structure of eukaryotic proteasomes.

The protein localises to the cytoplasm. The catalysed reaction is Hydrolysis of proteins to small peptides in the presence of ATP and magnesium. alpha-casein is the usual test substrate. In the absence of ATP, only oligopeptides shorter than five residues are hydrolyzed (such as succinyl-Leu-Tyr-|-NHMec, and Leu-Tyr-Leu-|-Tyr-Trp, in which cleavage of the -Tyr-|-Leu- and -Tyr-|-Trp bonds also occurs).. In terms of biological role, cleaves peptides in various proteins in a process that requires ATP hydrolysis. Has a chymotrypsin-like activity. Plays a major role in the degradation of misfolded proteins. The chain is ATP-dependent Clp protease proteolytic subunit from Jannaschia sp. (strain CCS1).